The chain runs to 242 residues: Phosducin-like protein 2 (242 aa).

In terms of domain architecture, Phosducin spans 34-201 (VLRLQKEAMV…LEWKLAEVGA (168 aa)). Residues 89–242 (FGELREISGN…SSNSDSEDTK (154 aa)) are thioredoxin fold.

This sequence belongs to the phosducin family. As to quaternary structure, interacts with the CCT chaperonin complex and actin.

It is found in the endoplasmic reticulum. In terms of biological role, essential for male fertility, spermiogenesis and acrosome formation. The polypeptide is Phosducin-like protein 2 (PDCL2) (Bos taurus (Bovine)).